A 186-amino-acid chain; its full sequence is Ribosome-recycling factor (186 aa).

This sequence belongs to the RRF family.

The protein localises to the cytoplasm. Responsible for the release of ribosomes from messenger RNA at the termination of protein biosynthesis. May increase the efficiency of translation by recycling ribosomes from one round of translation to another. In Rhodopseudomonas palustris (strain ATCC BAA-98 / CGA009), this protein is Ribosome-recycling factor.